Here is a 940-residue protein sequence, read N- to C-terminus: Pentatricopeptide repeat-containing protein At5g14770, mitochondrial (940 aa).

The N-terminal 24 residues, 1–24 (MIMIRIWNNYKGKYRFFLSNCRSF), are a transit peptide targeting the mitochondrion. PPR repeat units follow at residues 59 to 93 (YVSL…GVVP), 94 to 129 (DSRL…GVSP), 130 to 161 (DVFA…VISI), 162 to 196 (DTVT…GILP), 197 to 231 (DTVS…NLIT), 241 to 259 (NLHA…GFDP), 260 to 294 (DVVT…SVYP), 295 to 329 (NHVT…GIPV), 330 to 364 (DLVV…NQVP), 365 to 399 (NVVT…SVIP), 400 to 434 (NVVT…NVVP), 435 to 469 (NGFT…GVEE), 470 to 504 (NNYI…GVTL), 505 to 539 (DQIN…GMPW), 540 to 573 (DVVS…GIEP), 574 to 608 (DIAT…GIKP), 609 to 643 (SLMS…EIHP), 644 to 678 (NLTT…GIKL), 679 to 713 (SRQV…GFIP), 714 to 748 (DTVT…GISP), 749 to 783 (NVAT…GMRP), 784 to 818 (DDFT…GLVP), 819 to 853 (KTST…GVSP), and 854 to 891 (NTST…GLLK).

The protein belongs to the PPR family. P subfamily.

The protein localises to the mitochondrion. The sequence is that of Pentatricopeptide repeat-containing protein At5g14770, mitochondrial from Arabidopsis thaliana (Mouse-ear cress).